A 204-amino-acid polypeptide reads, in one-letter code: Matrix-remodeling-associated protein 7 (204 aa).

The helical transmembrane segment at leucine 7–valine 27 threads the bilayer. The interval alanine 32–leucine 148 is disordered. The segment covering alanine 38 to proline 47 has biased composition (pro residues). Positions glutamate 63–alanine 103 are enriched in low complexity. The segment covering valine 110–proline 126 has biased composition (basic and acidic residues). Serine 191 bears the Phosphoserine mark.

It is found in the membrane. This chain is Matrix-remodeling-associated protein 7 (MXRA7), found in Homo sapiens (Human).